The chain runs to 294 residues: Homoserine kinase (294 aa).

83–93 contributes to the ATP binding site; it reads RPKSGLGSSGA.

This sequence belongs to the GHMP kinase family. Homoserine kinase subfamily.

Its subcellular location is the cytoplasm. The catalysed reaction is L-homoserine + ATP = O-phospho-L-homoserine + ADP + H(+). The protein operates within amino-acid biosynthesis; L-threonine biosynthesis; L-threonine from L-aspartate: step 4/5. In terms of biological role, catalyzes the ATP-dependent phosphorylation of L-homoserine to L-homoserine phosphate. In Pyrococcus abyssi (strain GE5 / Orsay), this protein is Homoserine kinase.